We begin with the raw amino-acid sequence, 762 residues long: ABC-type oligopeptide transporter ABCB9 (762 aa).

Helical transmembrane passes span 7 to 27, 47 to 67, 84 to 104, 116 to 136, 181 to 201, 221 to 241, 315 to 335, and 412 to 432; these read VVVT…IYAF, VLDL…ATIG, LVIT…LLLF, FWAL…LWGL, VAFL…ETFL, FTTA…AAGI, VFMF…FPII, and SGLT…HLVI. In terms of domain architecture, ABC transmembrane type-1 spans 184–467; it reads LVAASFFLIV…VGSVYSGLMQ (284 aa). The region spanning 500–736 is the ABC transporter domain; it reads VDFENVTFTY…GGLYAKLVQR (237 aa). Residue 535–542 participates in ATP binding; it reads GPSGSGKS.

It belongs to the ABC transporter superfamily. ABCB family. MHC peptide exporter (TC 3.A.1.209) subfamily. As to quaternary structure, homodimer. Interacts (via TMD0 region) with LAMP1; this interaction strongly stabilizes ABCB9 and protects ABCB9 against lysosomal degradation. Interacts (via TMD0 region) with LAMP2 (isoform LAMP-2B). Interacts (via TMD0) with YIF1B; this interaction allows (but is not essential) the ER-to-Golgi trafficking and strongly depends on a salt bridge within TMD0. As to expression, highly expressed in testis, particularly in the Sertoli cells of the seminiferous tubules, and at moderate levels in brain and spinal cord.

It localises to the lysosome membrane. It catalyses the reaction a [oligopeptide](in) + ATP + H2O = a [oligopeptide](out) + ADP + phosphate + H(+). Functionally, ATP-dependent low-affinity peptide transporter which translocates a broad spectrum of peptides from the cytosol to the lysosomal lumen for degradation. Displays a broad peptide length specificity from 6-mer up to at least 59-mer peptides with an optimum of 23-mers. Binds and transports smaller and larger peptides with the same affinity. Favors positively charged, aromatic or hydrophobic residues in the N- and C-terminal positions whereas negatively charged residues as well as asparagine and methionine are not favored. The polypeptide is ABC-type oligopeptide transporter ABCB9 (Mus musculus (Mouse)).